A 365-amino-acid chain; its full sequence is 3-dehydroquinate synthase (365 aa).

NAD(+)-binding positions include 106 to 110, 130 to 131, Lys142, Lys151, and 169 to 172; these read GVIGD, TT, and FFAT. Residues Glu184, His247, and His264 each contribute to the Zn(2+) site.

This sequence belongs to the sugar phosphate cyclases superfamily. Dehydroquinate synthase family. The cofactor is NAD(+). Co(2+) serves as cofactor. It depends on Zn(2+) as a cofactor.

The protein localises to the cytoplasm. The catalysed reaction is 7-phospho-2-dehydro-3-deoxy-D-arabino-heptonate = 3-dehydroquinate + phosphate. It functions in the pathway metabolic intermediate biosynthesis; chorismate biosynthesis; chorismate from D-erythrose 4-phosphate and phosphoenolpyruvate: step 2/7. Functionally, catalyzes the conversion of 3-deoxy-D-arabino-heptulosonate 7-phosphate (DAHP) to dehydroquinate (DHQ). This chain is 3-dehydroquinate synthase, found in Listeria innocua serovar 6a (strain ATCC BAA-680 / CLIP 11262).